The chain runs to 253 residues: Indole-3-glycerol phosphate synthase (253 aa).

Belongs to the TrpC family.

It catalyses the reaction 1-(2-carboxyphenylamino)-1-deoxy-D-ribulose 5-phosphate + H(+) = (1S,2R)-1-C-(indol-3-yl)glycerol 3-phosphate + CO2 + H2O. It participates in amino-acid biosynthesis; L-tryptophan biosynthesis; L-tryptophan from chorismate: step 4/5. This Bacillus cereus (strain ZK / E33L) protein is Indole-3-glycerol phosphate synthase.